We begin with the raw amino-acid sequence, 139 residues long: Protein shisa-5 (139 aa).

The helical transmembrane segment at 3 to 23 (FGTLVAIGVIVFAVVVITIIL) threads the bilayer.

This sequence belongs to the shisa family.

Its subcellular location is the endoplasmic reticulum membrane. It is found in the nucleus membrane. Can induce apoptosis in a caspase-dependent manner and plays a role in p53/TP53-dependent apoptosis. The protein is Protein shisa-5 (Shisa5) of Gallus gallus (Chicken).